The following is a 906-amino-acid chain: Ectonucleotide pyrophosphatase/phosphodiesterase family member 1 (906 aa).

Residues 1-22 (MERDGDQAGHGPRHGSAGNGRE) form a disordered region. The Cytoplasmic portion of the chain corresponds to 1-58 (MERDGDQAGHGPRHGSAGNGRELESPAAASLLAPMDLGEEPLEKAERARPAKDPNTYK). Phosphoserine is present on Ser25. A Di-leucine motif motif is present at residues 27 to 34 (AAASLLAP). A helical; Signal-anchor for type II membrane protein membrane pass occupies residues 59–79 (VLSLVLSVCVLTTILGCIFGL). Topologically, residues 80-906 (KPSCAKEVKS…THLPIFSQED (827 aa)) are extracellular. SMB domains are found at residues 86–126 (EVKS…VEPT) and 127–171 (HIWT…DKKS). 10 cysteine pairs are disulfide-bonded: Cys90-Cys104, Cys94-Cys122, Cys102-Cys115, Cys108-Cys114, Cys131-Cys148, Cys136-Cys166, Cys146-Cys159, Cys152-Cys158, Cys177-Cys223, and Cys185-Cys397. N-linked (GlcNAc...) asparagine glycosylation is present at Asn161. Positions 173-573 (VEETCESIDT…APNNGSHGSL (401 aa)) are phosphodiesterase. AMP contacts are provided by Asp200, Thr238, and Asn259. Zn(2+)-binding residues include Asp200 and Thr238. Thr238 serves as the catalytic AMP-threonine intermediate. The CMP site is built by Thr238 and Asn259. 2 residues coordinate dTMP: Thr238 and Asn259. Positions 238 and 259 each coordinate GMP. Thr238 bears the Phosphothreonine mark. Asn267 carries N-linked (GlcNAc...) asparagine glycosylation. GMP-binding residues include Leu272, Lys277, and Tyr322. Lys277 and Tyr322 together coordinate AMP. CMP contacts are provided by Lys277 and Tyr322. Tyr322 contributes to the dTMP binding site. Asn323 carries an N-linked (GlcNAc...) asparagine glycan. Asp358 provides a ligand contact to AMP. 4 residues coordinate Zn(2+): Asp358, His362, Asp405, and His406. Asp358 contacts CMP. Asp358 contributes to the dTMP binding site. Asp358 lines the GMP pocket. Residue His362 coordinates 2',3'-cGAMP. His406 lines the AMP pocket. His406 is a CMP binding site. His406 contributes to the dTMP binding site. His406 lines the GMP pocket. Cystine bridges form between Cys413-Cys512, Cys462-Cys849, Cys596-Cys653, Cys607-Cys707, Cys609-Cys692, and Cys819-Cys829. Asn459 is a glycosylation site (N-linked (GlcNAc...) asparagine). Ser514 is a binding site for 2',3'-cGAMP. His517 is a binding site for AMP. His517 lines the Zn(2+) pocket. CMP is bound at residue His517. His517 is a binding site for dTMP. Residue His517 participates in GMP binding. Asn567 and Asn624 each carry an N-linked (GlcNAc...) asparagine glycan. Residues 579-628 (KPIYNPSHPKEEGFLSQCPIKSTSNDLGCTCDPWIVPIKDFEKQLNLTTE) form a linker region. Residues 635–906 (HMTVPYGRPR…THLPIFSQED (272 aa)) are nuclease-like domain. Asp781, Asp783, Asp785, Arg787, and Asp789 together coordinate Ca(2+).

It belongs to the nucleotide pyrophosphatase/phosphodiesterase family. In terms of assembly, ectonucleotide pyrophosphatase/phosphodiesterase family member 1: Homodimer. Ectonucleotide pyrophosphatase/phosphodiesterase family member 1: Interacts with INSR; leading to inhibit INSR autophosphorylation and subsequent activation of INSR kinase activity. Ectonucleotide pyrophosphatase/phosphodiesterase family member 1, secreted form: Monomeric. The cofactor is Zn(2+). In terms of processing, N-glycosylated. The secreted form is produced through cleavage at Lys-85 by intracellular processing. In terms of tissue distribution, selectively expressed on the surface of antibody-secreting cells. Expressed in osteocytes and osteoclasts.

Its subcellular location is the cell membrane. It is found in the basolateral cell membrane. It localises to the secreted. The enzyme catalyses Hydrolytically removes 5'-nucleotides successively from the 3'-hydroxy termini of 3'-hydroxy-terminated oligonucleotides.. It carries out the reaction a ribonucleoside 5'-triphosphate + H2O = a ribonucleoside 5'-phosphate + diphosphate + H(+). It catalyses the reaction ATP + H2O = AMP + diphosphate + H(+). The catalysed reaction is UTP + H2O = UMP + diphosphate + H(+). The enzyme catalyses GTP + H2O = GMP + diphosphate + H(+). It carries out the reaction CTP + H2O = CMP + diphosphate + H(+). It catalyses the reaction 2',3'-cGAMP + 2 H2O = GMP + AMP + 2 H(+). The catalysed reaction is P(1),P(4)-bis(5'-adenosyl) tetraphosphate + H2O = AMP + ATP + 2 H(+). The enzyme catalyses 3',5'-cyclic AMP + H2O = AMP + H(+). With respect to regulation, at low concentrations of ATP, a phosphorylated intermediate is formed which inhibits further hydrolysis. Its function is as follows. Nucleotide pyrophosphatase that generates diphosphate (PPi) and functions in bone mineralization and soft tissue calcification by regulating pyrophosphate levels. PPi inhibits bone mineralization and soft tissue calcification by binding to nascent hydroxyapatite crystals, thereby preventing further growth of these crystals. Preferentially hydrolyzes ATP, but can also hydrolyze other nucleoside 5' triphosphates such as GTP, CTP and UTP to their corresponding monophosphates with release of pyrophosphate, as well as diadenosine polyphosphates, and also 3',5'-cAMP to AMP. May also be involved in the regulation of the availability of nucleotide sugars in the endoplasmic reticulum and Golgi, and the regulation of purinergic signaling. Inhibits ectopic joint calcification and maintains articular chondrocytes by repressing hedgehog signaling; it is however unclear whether hedgehog inhibition is direct or indirect. Appears to modulate insulin sensitivity. Also involved in melanogenesis. Also able to hydrolyze 2',3'-cGAMP (cyclic GMP-AMP), a second messenger that activates TMEM173/STING and triggers type-I interferon production. 2',3'-cGAMP degradation takes place in the lumen or extracellular space, and not in the cytosol where it is produced; the role of 2',3'-cGAMP hydrolysis is therefore unclear. Not able to hydrolyze the 2',3'-cGAMP linkage isomer 3',3'-cGAMP. The protein is Ectonucleotide pyrophosphatase/phosphodiesterase family member 1 of Mus musculus (Mouse).